Here is a 205-residue protein sequence, read N- to C-terminus: Phosphoribosyl-dephospho-CoA transferase (205 aa).

Residues D134 and D136 contribute to the active site.

The protein belongs to the MdcG family.

It carries out the reaction apo-[malonate decarboxylase ACP] + 2'-(5''-triphospho-alpha-D-ribosyl)-3'-dephospho-CoA = holo-[malonate decarboxylase ACP] + diphosphate. Its function is as follows. Transfers 2'-(5-triphosphoribosyl)-3'-dephosphocoenzyme-A to the apo-[acyl-carrier-protein] of the malonate decarboxylase to yield holo-[acyl-carrier-protein]. The polypeptide is Phosphoribosyl-dephospho-CoA transferase (Klebsiella pneumoniae subsp. pneumoniae (strain ATCC 700721 / MGH 78578)).